A 540-amino-acid chain; its full sequence is Alanine aminotransferase 2 (540 aa).

At lysine 358 the chain carries N6-(pyridoxal phosphate)lysine.

The protein belongs to the class-I pyridoxal-phosphate-dependent aminotransferase family. Alanine aminotransferase subfamily. Homodimer. Requires pyridoxal 5'-phosphate as cofactor.

The enzyme catalyses L-alanine + 2-oxoglutarate = pyruvate + L-glutamate. It functions in the pathway amino-acid degradation; L-alanine degradation via transaminase pathway; pyruvate from L-alanine: step 1/1. Functionally, catalyzes the reversible transamination between alanine and 2-oxoglutarate to form pyruvate and glutamate. In Xenopus laevis (African clawed frog), this protein is Alanine aminotransferase 2 (gpt2).